Reading from the N-terminus, the 201-residue chain is Zinc finger protein 239 (201 aa).

7 consecutive C2H2-type zinc fingers follow at residues 6–28, 34–56, 62–84, 90–112, 118–140, 146–168, and 174–196; these read YKCDKCGKGFTRSSSLLVHHSVH, FKCDRCGKGFSQSSKLHIHKRVH, YACEECGMSFSQRSNLHIHQRVH, YKCGECGKGFSQSSNLHIHRCTH, YQCYECGKGFSQSSDLRIHLRVH, YHCGKCGQGFSQSSKLLIHQRVH, and YECSKCGKGFSQSSNLHIHQRVH.

It belongs to the krueppel C2H2-type zinc-finger protein family. Preferentially expressed in transformed mouse cells.

It is found in the nucleus. Functionally, may be involved in transcriptional regulation. The polypeptide is Zinc finger protein 239 (Znf239) (Mus musculus (Mouse)).